Reading from the N-terminus, the 557-residue chain is Resveratrol cleavage oxygenase 1 (557 aa).

A disordered region spans residues 1 to 46 (MAILNDPPSSTTILSLHTPDVPPPSKPTPATTSHPQDSRNPRNLTS). Piceatannol is bound by residues Tyr-144 and Lys-177. Residues Tyr-144 and Lys-177 each coordinate trans-resveratrol. His-211, His-262, and His-334 together coordinate Fe cation. Glu-404 contributes to the piceatannol binding site. Glu-404 is a binding site for trans-resveratrol. His-523 contacts Fe cation.

The protein belongs to the carotenoid oxygenase family. Requires Fe(2+) as cofactor.

It catalyses the reaction trans-resveratrol + O2 = 3,5-dihydroxybenzaldehyde + 4-hydroxybenzaldehyde. The enzyme catalyses piceatannol + O2 = 3,5-dihydroxybenzaldehyde + 3,4-dihydroxybenzaldehyde. In terms of biological role, dioxygenase that cleaves the interphenyl C-alpha-C-beta double bond of resveratrol to yield 3,5-dihydroxybenzaldehyde and 4-hydroxybenzaldehyde. Also cleaves piceatannol, a compound that differs from resveratrol only in the occurrence of an additional hydroxyl group, which leads to the production of 3,4-dihydroxybenzaldehyde and 3,5-hydroxybenzaldehyde. This is Resveratrol cleavage oxygenase 1 from Botryotinia fuckeliana (strain B05.10) (Noble rot fungus).